We begin with the raw amino-acid sequence, 657 residues long: Regulator of MON1-CCZ1 complex (657 aa).

The 167-residue stretch at 471 to 637 (KKEMPHKFVI…NFTPGEHCEE (167 aa)) folds into the Mic1 domain.

This sequence belongs to the RMC1 family. Found in a complex with RMC1, CCZ1 MON1A and MON1B.

The protein resides in the lysosome membrane. It localises to the late endosome membrane. Component of the CCZ1-MON1 RAB7A guanine exchange factor (GEF). Acts as a positive regulator of CCZ1-MON1A/B function necessary for endosomal/autophagic flux and efficient RAB7A localization. The polypeptide is Regulator of MON1-CCZ1 complex (Homo sapiens (Human)).